The primary structure comprises 188 residues: Elongation factor P (188 aa).

It belongs to the elongation factor P family.

The protein resides in the cytoplasm. The protein operates within protein biosynthesis; polypeptide chain elongation. Involved in peptide bond synthesis. Stimulates efficient translation and peptide-bond synthesis on native or reconstituted 70S ribosomes in vitro. Probably functions indirectly by altering the affinity of the ribosome for aminoacyl-tRNA, thus increasing their reactivity as acceptors for peptidyl transferase. This is Elongation factor P from Caulobacter vibrioides (strain ATCC 19089 / CIP 103742 / CB 15) (Caulobacter crescentus).